The chain runs to 660 residues: Acetyl-coenzyme A synthetase (660 aa).

CoA contacts are provided by residues 197-200 and Thr317; that span reads RGGK. ATP-binding positions include 397 to 399, 421 to 426, Asp512, and Arg528; these read GEP and DTFWQT. Ser536 contacts CoA. Arg539 serves as a coordination point for ATP. Positions 550 and 555 each coordinate Mg(2+). Lys625 bears the N6-acetyllysine mark.

The protein belongs to the ATP-dependent AMP-binding enzyme family. Mg(2+) is required as a cofactor. Acetylated. Deacetylation by the SIR2-homolog deacetylase activates the enzyme.

The enzyme catalyses acetate + ATP + CoA = acetyl-CoA + AMP + diphosphate. Catalyzes the conversion of acetate into acetyl-CoA (AcCoA), an essential intermediate at the junction of anabolic and catabolic pathways. AcsA undergoes a two-step reaction. In the first half reaction, AcsA combines acetate with ATP to form acetyl-adenylate (AcAMP) intermediate. In the second half reaction, it can then transfer the acetyl group from AcAMP to the sulfhydryl group of CoA, forming the product AcCoA. This chain is Acetyl-coenzyme A synthetase, found in Ralstonia pickettii (strain 12J).